A 184-amino-acid polypeptide reads, in one-letter code: UPF0149 protein PSPTO_5224 (184 aa).

The protein belongs to the UPF0149 family.

This chain is UPF0149 protein PSPTO_5224, found in Pseudomonas syringae pv. tomato (strain ATCC BAA-871 / DC3000).